The primary structure comprises 86 residues: Small ribosomal subunit protein bS20 (86 aa).

The segment covering 1–11 (MANIKSQKKRV) has biased composition (basic residues). A disordered region spans residues 1 to 20 (MANIKSQKKRVRTNEKAHQR).

Belongs to the bacterial ribosomal protein bS20 family.

Functionally, binds directly to 16S ribosomal RNA. The chain is Small ribosomal subunit protein bS20 from Bifidobacterium animalis subsp. lactis (strain AD011).